We begin with the raw amino-acid sequence, 259 residues long: Protein unc-50 homolog B (259 aa).

Polar residues predominate over residues 1–11 (MLPTTSVSPRS). The disordered stretch occupies residues 1–21 (MLPTTSVSPRSPDNGILSPRD). Residues 1-82 (MLPTTSVSPR…TKDQWARDDP (82 aa)) lie on the Cytoplasmic side of the membrane. The chain crosses the membrane as a helical span at residues 83-103 (AFLVLLGIWLCVSTVGFGFVL). Over 104–109 (DMSFFE) the chain is Lumenal. A helical membrane pass occupies residues 110-130 (TFTLLLWVVFIDCVGVGLLIA). Residues 131-158 (TSMWFVSNKYMVNRQGKDYDVEWGYTFD) lie on the Cytoplasmic side of the membrane. The helical transmembrane segment at 159–179 (VHLNAFYPLLVILHFIQLFFI) threads the bilayer. Residues 180–181 (NH) lie on the Lumenal side of the membrane. The chain crosses the membrane as a helical span at residues 182-202 (VILTGWFIGCFVGNTLWLIAI). At 203–222 (GYYIYITFLGYSALPFLKNT) the chain is on the cytoplasmic side. The chain crosses the membrane as a helical span at residues 223–243 (VVLLYPFAALALLYILSLALG). Topologically, residues 244–259 (WNFTAKLCLFYKYRVR) are lumenal.

This sequence belongs to the unc-50 family.

Its subcellular location is the nucleus inner membrane. The protein resides in the golgi apparatus membrane. Functionally, involved in the cell surface expression of neuronal nicotinic receptors. Binds RNA. This chain is Protein unc-50 homolog B (unc50-b), found in Xenopus laevis (African clawed frog).